A 992-amino-acid polypeptide reads, in one-letter code: UPF0182 protein BCG_3215c (992 aa).

The next 7 helical transmembrane spans lie at 18-38, 63-83, 113-133, 175-195, 210-230, 259-279, and 287-307; these read ILIMIALGVIVLLLAGPRLID, IVVCLVAGVVVGGIVFGGLAL, LVGIGIPAAIGLLAGIVAQSY, LVSVFLAFVANLVAHYIFGGI, VQLVSLVGVLVLLKAVAYWLD, KLILMAIALICAAAVFSAIAL, and IGLVLLLLSSLIVGAGWPLIV. The tract at residues 906–938 is disordered; it reads PTEAAVPPSPAANPPPPASGPQPPPVTAAPPVP. Pro residues predominate over residues 912–938; the sequence is PPSPAANPPPPASGPQPPPVTAAPPVP.

The protein belongs to the UPF0182 family.

Its subcellular location is the cell membrane. This chain is UPF0182 protein BCG_3215c, found in Mycobacterium bovis (strain BCG / Pasteur 1173P2).